The following is a 234-amino-acid chain: Membrane glycoprotein RL11 (234 aa).

Residues 1-23 (MQTYSTPLTLIIVTSLFLFTTQG) form the signal peptide. A helical membrane pass occupies residues 183–203 (LHCAWVSGLMIFVGALVICFL).

The protein localises to the host membrane. The polypeptide is Membrane glycoprotein RL11 (RL11) (Human cytomegalovirus (strain Merlin) (HHV-5)).